The following is a 228-amino-acid chain: Ion-translocating oxidoreductase complex subunit E (228 aa).

The next 5 helical transmembrane spans lie at 24–44 (LLGL…LGLG), 73–93 (VFVL…NAFF), 95–115 (ELYL…AIIG), 130–150 (LADG…LGAL), and 184–204 (GFLL…LIAL).

This sequence belongs to the NqrDE/RnfAE family. As to quaternary structure, the complex is composed of six subunits: RnfA, RnfB, RnfC, RnfD, RnfE and RnfG.

The protein localises to the cell inner membrane. Part of a membrane-bound complex that couples electron transfer with translocation of ions across the membrane. The chain is Ion-translocating oxidoreductase complex subunit E from Thioalkalivibrio sulfidiphilus (strain HL-EbGR7).